A 373-amino-acid polypeptide reads, in one-letter code: Thyroid hormone receptor beta-A (373 aa).

Residues 1–18 (MPSSMSGYIPSYLDKDEL) are modulating. NR C4-type zinc fingers lie at residues 19-39 (CVVC…CEGC) and 57-81 (CKYE…FKKC). The nuclear receptor DNA-binding region spans 19-93 (CVVCGDKATG…VGMATDLVLD (75 aa)). One can recognise an NR LBD domain in the interval 129–373 (EEWELIQVVT…PPLFLEVFED (245 aa)).

It belongs to the nuclear hormone receptor family. NR1 subfamily.

The protein localises to the nucleus. Functionally, high affinity receptor for triiodothyronine (T3). This is Thyroid hormone receptor beta-A (thrb-a) from Xenopus laevis (African clawed frog).